Consider the following 193-residue polypeptide: Ion-translocating oxidoreductase complex subunit A (193 aa).

The next 6 membrane-spanning stretches (helical) occupy residues 5-25 (LLLL…FLGL), 39-59 (VGMG…SYLM), 63-83 (ILIP…VIAV), 102-122 (LLGI…VALL), 134-154 (IIYG…FAAM), and 171-191 (SIAM…TGLI).

Belongs to the NqrDE/RnfAE family. As to quaternary structure, the complex is composed of six subunits: RnfA, RnfB, RnfC, RnfD, RnfE and RnfG.

It localises to the cell inner membrane. In terms of biological role, part of a membrane-bound complex that couples electron transfer with translocation of ions across the membrane. The protein is Ion-translocating oxidoreductase complex subunit A of Aeromonas salmonicida (strain A449).